The following is a 220-amino-acid chain: MFSEIAPRYDLLNRLLSFGADLRWRRRAVDLALEKAPKRILDLATGTGDLALMLKERAPGAEVVGADFAPPMLAIARRKAEARGLEVRFLEADALALPFPDGAFDAVTIAFGFRNFADYEKALGELYRVLAPGGRLVVLEFPPPPKGAFGLVYRVYFQRVLPFLGGLISGNFGAYRYLPESVEAFPAPEALKAMMAAAGFSVRYELLTFGVAAIHVGDRP.

S-adenosyl-L-methionine-binding positions include Thr47, Asp67, and 93–94; that span reads DA.

The protein belongs to the class I-like SAM-binding methyltransferase superfamily. MenG/UbiE family.

The catalysed reaction is a 2-demethylmenaquinol + S-adenosyl-L-methionine = a menaquinol + S-adenosyl-L-homocysteine + H(+). It participates in quinol/quinone metabolism; menaquinone biosynthesis; menaquinol from 1,4-dihydroxy-2-naphthoate: step 2/2. Its function is as follows. Methyltransferase required for the conversion of demethylmenaquinol (DMKH2) to menaquinol (MKH2). In Thermus thermophilus (strain ATCC BAA-163 / DSM 7039 / HB27), this protein is Demethylmenaquinone methyltransferase.